The chain runs to 98 residues: Cell division protein FtsB (98 aa).

Over 1-3 (MKR) the chain is Cytoplasmic. The helical transmembrane segment at 4-21 (LLIVLIALLAMLEYRLWF) threads the bilayer. The Periplasmic segment spans residues 22 to 98 (GDKSLAESFH…GGERDKPSND (77 aa)). A coiled-coil region spans residues 31–74 (HLQEQIKLQQQSNAQLVARNQILREEISDLRSGTEALEERARNE).

It belongs to the FtsB family. As to quaternary structure, part of a complex composed of FtsB, FtsL and FtsQ.

It localises to the cell inner membrane. Its function is as follows. Essential cell division protein. May link together the upstream cell division proteins, which are predominantly cytoplasmic, with the downstream cell division proteins, which are predominantly periplasmic. The chain is Cell division protein FtsB from Shewanella halifaxensis (strain HAW-EB4).